Consider the following 176-residue polypeptide: NAD(P)H-quinone oxidoreductase subunit 6, chloroplastic (176 aa).

A run of 5 helical transmembrane segments spans residues 10–30, 32–52, 61–81, 105–125, and 153–173; these read FLLV…VLFP, PIYS…FYIL, AQLL…VMFL, ISLF…GIIW, and FLPF…AIVI.

This sequence belongs to the complex I subunit 6 family. NDH is composed of at least 16 different subunits, 5 of which are encoded in the nucleus.

Its subcellular location is the plastid. It is found in the chloroplast thylakoid membrane. It carries out the reaction a plastoquinone + NADH + (n+1) H(+)(in) = a plastoquinol + NAD(+) + n H(+)(out). The enzyme catalyses a plastoquinone + NADPH + (n+1) H(+)(in) = a plastoquinol + NADP(+) + n H(+)(out). In terms of biological role, NDH shuttles electrons from NAD(P)H:plastoquinone, via FMN and iron-sulfur (Fe-S) centers, to quinones in the photosynthetic chain and possibly in a chloroplast respiratory chain. The immediate electron acceptor for the enzyme in this species is believed to be plastoquinone. Couples the redox reaction to proton translocation, and thus conserves the redox energy in a proton gradient. The chain is NAD(P)H-quinone oxidoreductase subunit 6, chloroplastic (ndhG) from Ipomoea purpurea (Common morning glory).